The sequence spans 332 residues: Ribose operon repressor (332 aa).

An HTH lacI-type domain is found at 2-56; that stretch reads ATMKDIARLAQVSTSTVSHVINGSRFVSDEIREKVMRIVAELNYTPSAVARSLKV. The segment at residues 4–23 is a DNA-binding region (H-T-H motif); that stretch reads MKDIARLAQVSTSTVSHVIN.

Transcriptional repressor for the ribose rbsDACBK operon. In Haemophilus influenzae (strain ATCC 51907 / DSM 11121 / KW20 / Rd), this protein is Ribose operon repressor (rbsR).